The following is a 109-amino-acid chain: Nucleoid-associated protein VV1_2004 (109 aa).

The protein belongs to the YbaB/EbfC family. As to quaternary structure, homodimer.

Its subcellular location is the cytoplasm. It localises to the nucleoid. Functionally, binds to DNA and alters its conformation. May be involved in regulation of gene expression, nucleoid organization and DNA protection. The polypeptide is Nucleoid-associated protein VV1_2004 (Vibrio vulnificus (strain CMCP6)).